The sequence spans 444 residues: D(2) dopamine receptor (444 aa).

At 1–37 the chain is on the extracellular side; sequence MDPLNLSWYDDDPESRNWSRPFNGSEGKADRPPYNYY. Residues Asn5, Asn17, and Asn23 are each glycosylated (N-linked (GlcNAc...) asparagine). Residues 38 to 60 traverse the membrane as a helical segment; sequence AMLLTLLIFVIVFGNVLVCMAVS. The Cytoplasmic portion of the chain corresponds to 61-70; the sequence is REKALQTTTN. A helical membrane pass occupies residues 71 to 93; that stretch reads YLIVSLAVADLLVATLVMPWVVY. At 94–108 the chain is on the extracellular side; it reads LEVVGEWKFSRIHCD. A disulfide bond links Cys107 and Cys182. Residues 109-130 traverse the membrane as a helical segment; that stretch reads IFVTLDVMMCTASILNLCAISI. Residues 131 to 151 lie on the Cytoplasmic side of the membrane; sequence DRYTAVAMPMLYNTRYSSKRR. The helical transmembrane segment at 152-172 threads the bilayer; sequence VTVMIAIVWVLSFTISCPMLF. At 173–188 the chain is on the extracellular side; the sequence is GLNNTDQNECIIANPA. Residues 189-213 form a helical membrane-spanning segment; the sequence is FVVYSSIVSFYVPFIVTLLVYIKIY. The segment at 211-374 is interaction with PPP1R9B; that stretch reads KIYIVLRRRR…SQQKEKKATQ (164 aa). The Cytoplasmic portion of the chain corresponds to 214 to 374; sequence IVLRRRRKRV…SQQKEKKATQ (161 aa). The segment at 281–332 is disordered; the sequence is MEMLSSTSPPERTRYSPIPPSHHQLTLPDPSHHGLHSTPDSPAKPEKNGHAK. Residues 375–396 traverse the membrane as a helical segment; it reads MLAIVLGVFIICWLPFFITHIL. The Extracellular segment spans residues 397 to 410; it reads NIHCDCNIPPVLYS. Cys400 and Cys402 are disulfide-bonded. A helical transmembrane segment spans residues 411-432; sequence AFTWLGYVNSAVNPIIYTTFNI. At 433-444 the chain is on the cytoplasmic side; sequence EFRKAFLKILHC. Residue Cys444 is the site of S-palmitoyl cysteine attachment.

The protein belongs to the G-protein coupled receptor 1 family. In terms of assembly, forms homo- and heterooligomers with DRD4. The interaction with DRD4 may modulate agonist-induced downstream signaling. Interacts with CADPS and CADPS2. Interacts with GPRASP1, PPP1R9B and CLIC6. Interacts with ARRB2. Interacts with HTR2A. Interacts with DRD1. Interacts with KCNA2. Post-translationally, palmitoylated. Palmitoylation which is required for proper localization to the plasma membrane and stability of the receptor could be carried on by ZDHHC4, ZDHHC3 and ZDHHC8.

It localises to the cell membrane. It is found in the golgi apparatus membrane. Functionally, dopamine receptor whose activity is mediated by G proteins which inhibit adenylyl cyclase. Positively regulates postnatal regression of retinal hyaloid vessels via suppression of VEGFR2/KDR activity, downstream of OPN5. The sequence is that of D(2) dopamine receptor (DRD2) from Bos taurus (Bovine).